The chain runs to 388 residues: Succinate--CoA ligase [ADP-forming] subunit beta (388 aa).

The region spanning 9–244 (KQLFAEYGLP…PSQDDPREAH (236 aa)) is the ATP-grasp domain. ATP-binding positions include K46, 53 to 55 (GRG), E99, T102, and E107. N199 and D213 together coordinate Mg(2+). Residues N264 and 321-323 (GIV) each bind substrate.

The protein belongs to the succinate/malate CoA ligase beta subunit family. Heterotetramer of two alpha and two beta subunits. Mg(2+) is required as a cofactor.

It carries out the reaction succinate + ATP + CoA = succinyl-CoA + ADP + phosphate. The enzyme catalyses GTP + succinate + CoA = succinyl-CoA + GDP + phosphate. It functions in the pathway carbohydrate metabolism; tricarboxylic acid cycle; succinate from succinyl-CoA (ligase route): step 1/1. Its function is as follows. Succinyl-CoA synthetase functions in the citric acid cycle (TCA), coupling the hydrolysis of succinyl-CoA to the synthesis of either ATP or GTP and thus represents the only step of substrate-level phosphorylation in the TCA. The beta subunit provides nucleotide specificity of the enzyme and binds the substrate succinate, while the binding sites for coenzyme A and phosphate are found in the alpha subunit. This is Succinate--CoA ligase [ADP-forming] subunit beta from Pseudomonas fluorescens (strain SBW25).